Consider the following 163-residue polypeptide: Nucleotide-binding protein SACE_6882 (163 aa).

The protein belongs to the YajQ family.

Nucleotide-binding protein. In Saccharopolyspora erythraea (strain ATCC 11635 / DSM 40517 / JCM 4748 / NBRC 13426 / NCIMB 8594 / NRRL 2338), this protein is Nucleotide-binding protein SACE_6882.